The chain runs to 475 residues: Melanopsin (475 aa).

Over 1-21 (MGTQHRIKVDVPDRVLYTVGS) the chain is Extracellular. Residues 22–42 (CVLVIGSIGITGNLLVLYAFY) form a helical membrane-spanning segment. Residues 43 to 53 (SNKRLRTPANY) lie on the Cytoplasmic side of the membrane. The chain crosses the membrane as a helical span at residues 54-74 (FIMNLAASDFLMSATQAPICF). The Extracellular portion of the chain corresponds to 75 to 90 (LNSMHTEWILGDIGCN). Cysteine 89 and cysteine 167 are joined by a disulfide. The chain crosses the membrane as a helical span at residues 91-111 (FYVFCGALFGITSMMTLLAIS). At 112-134 (VDRYCVITKPLQSIKRSSKKRSC) the chain is on the cytoplasmic side. A helical membrane pass occupies residues 135 to 155 (IIIAFVWLYSLGWSVCPLFGW). Residues 156–187 (SSYIPEGLMISCTWDYVSYSPANRSYTMMLCC) lie on the Extracellular side of the membrane. Asparagine 178 carries N-linked (GlcNAc...) asparagine glycosylation. Residues 188–208 (FVFFIPLIIIFHCYLFMFLAI) traverse the membrane as a helical segment. Residues 209 to 240 (RSTGRNVQKLGSTYNRKSNVSQSVKSEWKLAK) lie on the Cytoplasmic side of the membrane. A helical transmembrane segment spans residues 241–261 (IAFVAIVVFVLSWSPYACVTL). Over 262–276 (IAWAGYAKTLNPYSK) the chain is Extracellular. A helical transmembrane segment spans residues 277–297 (SVPAVIAKASAIYNPIIYAII). Residue lysine 284 is modified to N6-(retinylidene)lysine. Residues 298-475 (HPRYRRTIRS…EQHQMEASSH (178 aa)) are Cytoplasmic-facing. Disordered stretches follow at residues 370–390 (VEAA…KQAE) and 445–475 (PFGL…ASSH). Residues 375–384 (KKQQPHRSRS) show a composition bias toward basic residues. The span at 445–454 (PFGLNSSSTE) shows a compositional bias: polar residues. Over residues 455 to 464 (ENADTSDMEV) the composition is skewed to acidic residues. Basic and acidic residues predominate over residues 465–475 (QEQHQMEASSH).

It belongs to the G-protein coupled receptor 1 family. Opsin subfamily. As to expression, highest level in the lateral eye. Low level in the brain.

Its subcellular location is the cell membrane. Photoreceptor implicated in non-image-forming responses to light. May be able to isomerize covalently bound all-trans retinal back to 11-cis retinal. The polypeptide is Melanopsin (OPN4) (Podarcis siculus (Italian wall lizard)).